We begin with the raw amino-acid sequence, 262 residues long: Pyridoxine 5'-phosphate synthase (262 aa).

Asparagine 6 is a 3-amino-2-oxopropyl phosphate binding site. Residue 8–9 participates in 1-deoxy-D-xylulose 5-phosphate binding; that stretch reads DH. Residue arginine 17 coordinates 3-amino-2-oxopropyl phosphate. The active-site Proton acceptor is histidine 43. The 1-deoxy-D-xylulose 5-phosphate site is built by arginine 45 and histidine 50. Glutamate 70 (proton acceptor) is an active-site residue. A 1-deoxy-D-xylulose 5-phosphate-binding site is contributed by threonine 102. Catalysis depends on histidine 215, which acts as the Proton donor. Residues glycine 216 and 237–238 contribute to the 3-amino-2-oxopropyl phosphate site; that span reads GH.

The protein belongs to the PNP synthase family. In terms of assembly, homooctamer; tetramer of dimers.

It is found in the cytoplasm. It catalyses the reaction 3-amino-2-oxopropyl phosphate + 1-deoxy-D-xylulose 5-phosphate = pyridoxine 5'-phosphate + phosphate + 2 H2O + H(+). Its pathway is cofactor biosynthesis; pyridoxine 5'-phosphate biosynthesis; pyridoxine 5'-phosphate from D-erythrose 4-phosphate: step 5/5. In terms of biological role, catalyzes the complicated ring closure reaction between the two acyclic compounds 1-deoxy-D-xylulose-5-phosphate (DXP) and 3-amino-2-oxopropyl phosphate (1-amino-acetone-3-phosphate or AAP) to form pyridoxine 5'-phosphate (PNP) and inorganic phosphate. This Helicobacter acinonychis (strain Sheeba) protein is Pyridoxine 5'-phosphate synthase.